We begin with the raw amino-acid sequence, 107 residues long: Nucleoid-associated protein BAbS19_I00290 (107 aa).

Belongs to the YbaB/EbfC family. As to quaternary structure, homodimer.

It is found in the cytoplasm. Its subcellular location is the nucleoid. Its function is as follows. Binds to DNA and alters its conformation. May be involved in regulation of gene expression, nucleoid organization and DNA protection. This Brucella abortus (strain S19) protein is Nucleoid-associated protein BAbS19_I00290.